Reading from the N-terminus, the 355-residue chain is MISKQQISEIISNYDLNDLAIATVCSHSSLQIFDGARKEGLRTIGICVGQPPRFYDAFPKAKPDEYIVVESYSDIPKIAEELVRKNAIVIPHGSFVEYMGTESFAELAVPTFGNREVLEWESDRDKEREWLEGAGIHMPKIVDPEKIESPVMVKYHGAKGGRGFFIAKDYEEFKQYIDPNEKHTVQEFIVGTRYYLHFFYSPIREEGYKLSEGILEMLSMDRRVESNADEIFRLGSPKELEDAGIHPTYVVTGNVPLVARESLLPRIFALGEKVVEESLGLFGGMIGPFCLETVFTDKLEIKVFEISARIVAGTNLYTSGSPYSDMIEENLSTGKRIAQEIKLGAKTGKLDLILS.

Residues H27 and S94 each contribute to the 5-amino-1-(5-phospho-beta-D-ribosyl)imidazole-4-carboxamide site. Positions 101–332 (TESFAELAVP…YSDMIEENLS (232 aa)) constitute an ATP-grasp domain. Residues 144 to 195 (PEKI…TRYY) and E225 each bind ATP. N254 contributes to the 5-amino-1-(5-phospho-beta-D-ribosyl)imidazole-4-carboxamide binding site. The Mg(2+) site is built by E292 and E305.

Belongs to the phosphohexose mutase family. Requires Mg(2+) as cofactor. It depends on Mn(2+) as a cofactor.

It catalyses the reaction 5-amino-1-(5-phospho-beta-D-ribosyl)imidazole-4-carboxamide + formate + ATP = 5-formamido-1-(5-phospho-D-ribosyl)imidazole-4-carboxamide + ADP + phosphate. The protein operates within purine metabolism; IMP biosynthesis via de novo pathway; 5-formamido-1-(5-phospho-D-ribosyl)imidazole-4-carboxamide from 5-amino-1-(5-phospho-D-ribosyl)imidazole-4-carboxamide (formate route): step 1/1. Catalyzes the ATP- and formate-dependent formylation of 5-aminoimidazole-4-carboxamide-1-beta-d-ribofuranosyl 5'-monophosphate (AICAR) to 5-formaminoimidazole-4-carboxamide-1-beta-d-ribofuranosyl 5'-monophosphate (FAICAR) in the absence of folates. This chain is 5-formaminoimidazole-4-carboxamide-1-(beta)-D-ribofuranosyl 5'-monophosphate synthetase, found in Methanococcoides burtonii (strain DSM 6242 / NBRC 107633 / OCM 468 / ACE-M).